The chain runs to 382 residues: MQIPFSSSTSSSLGIEWELQLVDQQSRELRGEATLILDELRAKVGEREAAKAKHELFESTVEVITGVCGSVGEATADLAGTVSLLRDLAERRGVGLMCSGTHPTSDYAGQRITDDNRYSRLVSQMQWLARRLLIFGVHVHVGVRSPDKAMPIMNALMVYIPHFLALSASSPFWLGGDTGLASSRSQVFASLPTAGLPYPLEDWPRFESFMETLIAAGTIETIREVWWDIRPHPNFGTVELRICDGLPTLLEVGAVAALAQCLVDRMNTQIDRGYRLPTPQRWLVQENKWRAARYGLDAQILIDDRGGVRSVRDDLVDLVEDLLPVAHRLDCAQQLADVLVILETGASYTRQRAVARRADGDLTRVVDTLLEEMNTGRPVVAG.

This sequence belongs to the glutamate--cysteine ligase type 2 family. YbdK subfamily.

The enzyme catalyses L-cysteine + L-glutamate + ATP = gamma-L-glutamyl-L-cysteine + ADP + phosphate + H(+). Its function is as follows. ATP-dependent carboxylate-amine ligase which exhibits weak glutamate--cysteine ligase activity. The protein is Putative glutamate--cysteine ligase 2-1 of Frankia alni (strain DSM 45986 / CECT 9034 / ACN14a).